A 447-amino-acid chain; its full sequence is GTPase Der (447 aa).

2 consecutive EngA-type G domains span residues 4–165 and 180–357; these read QIIT…PEEE and LQIV…KIWN. GTP-binding positions include 10–17, 57–61, 119–122, 186–193, 233–237, and 298–301; these read GRPNVGKS, DTPGL, NKCE, GRPNAGKS, DTAGL, and NKWD. The 86-residue stretch at 358–443 folds into the KH-like domain; that stretch reads KKITTSKLNE…PIRFIYVKTK (86 aa).

It belongs to the TRAFAC class TrmE-Era-EngA-EngB-Septin-like GTPase superfamily. EngA (Der) GTPase family. As to quaternary structure, associates with the 50S ribosomal subunit.

Its function is as follows. GTPase that plays an essential role in the late steps of ribosome biogenesis. This is GTPase Der from Rickettsia conorii (strain ATCC VR-613 / Malish 7).